A 585-amino-acid chain; its full sequence is Arginine--tRNA ligase (585 aa).

The short motif at 127 to 137 is the 'HIGH' region element; it reads PNTNKPLHVGH.

Belongs to the class-I aminoacyl-tRNA synthetase family. As to quaternary structure, monomer.

Its subcellular location is the cytoplasm. The enzyme catalyses tRNA(Arg) + L-arginine + ATP = L-arginyl-tRNA(Arg) + AMP + diphosphate. This is Arginine--tRNA ligase from Borreliella afzelii (strain PKo) (Borrelia afzelii).